The following is a 70-amino-acid chain: Small ribosomal subunit protein bS18c (70 aa).

Belongs to the bacterial ribosomal protein bS18 family. In terms of assembly, part of the 30S ribosomal subunit.

It localises to the plastid. The protein localises to the chloroplast. This is Small ribosomal subunit protein bS18c from Pyropia yezoensis (Susabi-nori).